The primary structure comprises 493 residues: Cytochrome P450 Tp9025 (493 aa).

Residues 1–21 traverse the membrane as a helical; Signal-anchor for type II membrane protein segment; that stretch reads MALYIIFLLIASSFILFSFIF. Residues asparagine 209 and asparagine 411 are each glycosylated (N-linked (GlcNAc...) asparagine). Cysteine 433 is a binding site for heme.

The protein belongs to the cytochrome P450 family. Heme serves as cofactor.

The protein localises to the membrane. Its pathway is secondary metabolite biosynthesis; terpenoid biosynthesis. In terms of biological role, probably involved in the biosynthesis of germacrene-derived sesquiterpene lactones. This is Cytochrome P450 Tp9025 from Tanacetum parthenium (Feverfew).